Reading from the N-terminus, the 191-residue chain is MSAKIILVFCAQALFVQSALSQCTSRATVAADRGIIGGYGLGAPYGLAYGLEAPLGLGYGLGAPCGLAGPAIDITPTIGGGLPVSSASAIAPVGLVVASENVYEGILAAAGELPFVGTVGVEGVLPTAGAGAVHHSCGDGINAMASRDAAFAPGYAGAHGIGLGAYGLGVPALEVPALGYRAGWRGCGCGL.

An N-terminal signal peptide occupies residues 1-21 (MSAKIILVFCAQALFVQSALS).

Belongs to the chorion protein family.

This protein is one of many from the eggshell of the gypsy moth. In Lymantria dispar (Gypsy moth), this protein is Chorion class B protein Ld10.